The sequence spans 397 residues: Autophagy-related protein 29 (397 aa).

Positions alanine 71–glutamine 397 are disordered. The segment covering glutamine 230–glutamate 240 has biased composition (acidic residues). Residues proline 245–glycine 259 are compositionally biased toward polar residues. Residues serine 269 to isoleucine 282 show a composition bias toward basic residues. Composition is skewed to basic and acidic residues over residues lysine 300–glutamate 309 and glycine 330–serine 341. 2 stretches are compositionally biased toward polar residues: residues glycine 343–alanine 363 and phenylalanine 381–glutamine 397.

It belongs to the ATG29 family. As to quaternary structure, forms a stable complex with ATG17 and ATG31. Interacts directly with ATG31. The ATG17-ATG29-ATG31 complex interacts with the ATG1-ATG13 complex. Note=The interaction with the ATG1-ATG13 complex is induced by starvation.

It localises to the preautophagosomal structure. Functionally, plays a role in autophagy. Functions at the preautophagosomal structure (PAS) in order to form normal autophagosomes under starvation conditions. Also plays a role in mitophagy. Autophagy is required for proper vegetative growth, asexual/sexual reproduction, and full virulence. Autophagy is particularly involved in the biosynthesis of deoxynivalenol (DON), an important virulence determinant. This is Autophagy-related protein 29 from Gibberella zeae (strain ATCC MYA-4620 / CBS 123657 / FGSC 9075 / NRRL 31084 / PH-1) (Wheat head blight fungus).